We begin with the raw amino-acid sequence, 412 residues long: DnaJ homolog subfamily A member 2 (412 aa).

Residues 8 to 70 (KLYDILGVPP…EKRELYDRYG (63 aa)) form the J domain. N6-acetyllysine is present on lysine 39. Residues serine 78 and serine 123 each carry the phosphoserine modification. The CR-type zinc-finger motif lies at 130 to 214 (GKTTKLQLSK…CEGKKVIKEV (85 aa)). Lysine 134 participates in a covalent cross-link: Glycyl lysine isopeptide (Lys-Gly) (interchain with G-Cter in SUMO2). Residues cysteine 143 and cysteine 146 each contribute to the Zn(2+) site. The CXXCXGXG motif repeat unit spans residues 143-150 (CSACSGQG). Position 152 is an N6-acetyllysine (lysine 152). Zn(2+) is bound by residues cysteine 159, cysteine 162, cysteine 186, cysteine 189, cysteine 202, and cysteine 205. CXXCXGXG motif repeat units lie at residues 159–166 (CSACRGRG), 186–193 (CSDCNGEG), and 202–209 (CKKCEGKK). Positions 365-412 (IGETEEVELQEFDSTRGSGGGQRREAYNDSSDEESSSHHGPGVQCAHQ) are disordered. A Phosphotyrosine modification is found at tyrosine 391. Residues serine 394 and serine 395 each carry the phosphoserine modification. Cysteine 409 is subject to Cysteine methyl ester. Cysteine 409 carries S-farnesyl cysteine lipidation. A propeptide spans 410–412 (AHQ) (removed in mature form).

It is found in the membrane. In terms of biological role, co-chaperone of Hsc70. Stimulates ATP hydrolysis and the folding of unfolded proteins mediated by HSPA1A/B (in vitro). This is DnaJ homolog subfamily A member 2 (DNAJA2) from Homo sapiens (Human).